The chain runs to 396 residues: Period circadian protein (396 aa).

4 disordered regions span residues 27–120 (VTAP…APPV), 164–188 (LEYSGPGPGHGHGIKRGGSHSWEGE), 253–273 (GGNGNVGSGNGNNNQPSTNQY), and 333–362 (SPSSTNTNPNRPHKHAHVHNSSEKPSTSQA). Over residues 93–114 (GTSGTGNSGDGGGGGGANGTGS) the composition is skewed to gly residues. Over residues 253–262 (GGNGNVGSGN) the composition is skewed to gly residues. The segment covering 333–342 (SPSSTNTNPN) has biased composition (low complexity).

As to quaternary structure, forms a heterodimer with timeless (TIM); the complex then translocates into the nucleus. Phosphorylated with a circadian rhythmicity, probably by the double-time protein (dbt). Phosphorylation could be implicated in the stability of per monomer and in the formation of heterodimer per-tim.

It localises to the nucleus. The protein localises to the cytoplasm. It is found in the perinuclear region. Functionally, essential for biological clock functions. Determines the period length of circadian and ultradian rhythms; an increase in PER dosage leads to shortened circadian rhythms and a decrease leads to lengthened circadian rhythms. Essential for the circadian rhythmicity of locomotor activity, eclosion behavior, and for the rhythmic component of the male courtship song that originates in the thoracic nervous system. The biological cycle depends on the rhythmic formation and nuclear localization of the TIM-PER complex. Light induces the degradation of TIM, which promotes elimination of PER. Nuclear activity of the heterodimer coordinatively regulates PER and TIM transcription through a negative feedback loop. Behaves as a negative element in circadian transcriptional loop. Does not appear to bind DNA, suggesting indirect transcriptional inhibition. This is Period circadian protein (per) from Drosophila pavlovskiana (Fruit fly).